The sequence spans 409 residues: Phospholipase ABHD3 (409 aa).

A helical; Signal-anchor for type II membrane protein membrane pass occupies residues 26–46; the sequence is GFFGSGVGLSLILGFSVAYAF. One can recognise an AB hydrolase-1 domain in the interval 140–233; that stretch reads PTILLLPGLT…MLLLNYLGKI (94 aa). Catalysis depends on charge relay system residues S220, D346, and H375.

It belongs to the AB hydrolase superfamily. AB hydrolase 4 family.

Its subcellular location is the membrane. The catalysed reaction is a 1,2-diacyl-sn-glycero-3-phosphocholine + H2O = a 1-acyl-sn-glycero-3-phosphocholine + a fatty acid + H(+). It carries out the reaction a 1,2-diacyl-sn-glycero-3-phosphocholine + H2O = a 2-acyl-sn-glycero-3-phosphocholine + a fatty acid + H(+). It catalyses the reaction 1-tetradecanoyl-2-(9Z,12Z-octadecadienoyl)-sn-glycero-3-phosphocholine + H2O = 2-(9Z,12Z-octadecadienoyl)-sn-glycero-3-phosphocholine + tetradecanoate + H(+). The enzyme catalyses 1-tetradecanoyl-2-(9Z,12Z-octadecadienoyl)-sn-glycero-3-phosphocholine + H2O = 1-tetradecanoyl-sn-glycero-3-phosphocholine + (9Z,12Z)-octadecadienoate + H(+). The catalysed reaction is 1-tetradecanoyl-2-(5Z,8Z,11Z,14Z-eicosatetraenoyl)-sn-glycero-3-phosphocholine + H2O = 2-(5Z,8Z,11Z,14Z)-eicosatetraenoyl-sn-glycero-3-phosphocholine + tetradecanoate + H(+). It carries out the reaction 1-tetradecanoyl-2-(4Z,7Z,10Z,13Z,16Z,19Z-docosahexaenoyl)-sn-glycero-3-phosphocholine + H2O = 2-(4Z,7Z,10Z,13Z,16Z,19Z-docosahexaenoyl)-sn-glycero-3-phosphocholine + tetradecanoate + H(+). It catalyses the reaction 1,2-ditetradecanoyl-sn-glycero-3-phosphocholine + H2O = 2-tetradecanoyl-sn-glycero-3-phosphocholine + tetradecanoate + H(+). The enzyme catalyses 1-octadecanoyl-2-acetyl-sn-glycero-3-phosphocholine + H2O = 1-octadecanoyl-sn-glycero-3-phosphocholine + acetate + H(+). The catalysed reaction is 1,2-ditetradecanoyl-sn-glycero-3-phosphocholine + H2O = 1-tetradecanoyl-sn-glycero-3-phosphocholine + tetradecanoate + H(+). It carries out the reaction 1-octadecanoyl-2-pentanoyl-sn-glycero-3-phosphocholine + H2O = pentanoate + 1-octadecanoyl-sn-glycero-3-phosphocholine + H(+). It catalyses the reaction 1-octadecanoyl-2-hexanoyl-sn-glycero-3-phosphocholine + H2O = hexanoate + 1-octadecanoyl-sn-glycero-3-phosphocholine + H(+). The enzyme catalyses 1-octadecanoyl-2-octanoyl-sn-glycero-3-phosphocholine + H2O = 1-octadecanoyl-sn-glycero-3-phosphocholine + octanoate + H(+). The catalysed reaction is 1-octadecanoyl-2-nonanoyl-sn-glycero-3-phosphocholine + H2O = nonanoate + 1-octadecanoyl-sn-glycero-3-phosphocholine + H(+). It carries out the reaction 1-O-hexadecyl-2-nonadioyl-sn-glycero-3-phosphocholine + H2O = nonanedioate + 1-O-hexadecyl-sn-glycero-3-phosphocholine + H(+). It catalyses the reaction 1-hexadecanoyl-2-nonadioyl-sn-glycero-3-phosphocholine + H2O = nonanedioate + 1-hexadecanoyl-sn-glycero-3-phosphocholine + H(+). The enzyme catalyses 1-hexadecanoyl-2-(9-oxononanoyl)-sn-glycero-3-phosphocholine + H2O = 9-oxononanoate + 1-hexadecanoyl-sn-glycero-3-phosphocholine + H(+). The catalysed reaction is 1-hexadecanoyl-2-(5-oxopentanoyl)-sn-glycero-3-phosphocholine + H2O = 5-oxopentanoate + 1-hexadecanoyl-sn-glycero-3-phosphocholine + H(+). It carries out the reaction 1-hexadecanoyl-2-glutaroyl-sn-glycero-3-phosphocholine + H2O = glutarate + 1-hexadecanoyl-sn-glycero-3-phosphocholine + H(+). It catalyses the reaction 1-O-hexadecyl-2-acetyl-sn-glycero-3-phosphocholine + H2O = 1-O-hexadecyl-sn-glycero-3-phosphocholine + acetate + H(+). Phospholipase that may play a role in phospholipids remodeling. May selectively cleave myristate (C14)-containing phosphatidylcholines through its predominant phospholipase 1 activity, cleaving preferentially acyl groups in sn1 position. In parallel, may have a minor phospholipase 2 activity acting on acyl groups in position sn2. In addition to (C14)-containing phosphatidylcholines, may also act on other medium-chain-containing and oxidatively truncated phospholipids. The polypeptide is Phospholipase ABHD3 (Homo sapiens (Human)).